Here is a 530-residue protein sequence, read N- to C-terminus: GH3 domain-containing protein (530 aa).

An N-terminal signal peptide occupies residues 1-17; that stretch reads MLLWPLLLLLLLLPTLA. A disordered region spans residues 99-122; the sequence is LTKASQTQQEDSGEQPLPPTSNQD. An N-linked (GlcNAc...) asparagine glycan is attached at asparagine 450. Glutamine 489 carries the post-translational modification N5-methylglutamine.

This sequence belongs to the GH3 family. In terms of processing, methylated at Gln-489 by N6AMT1.

Its subcellular location is the endoplasmic reticulum. It is found in the nucleus envelope. This Homo sapiens (Human) protein is GH3 domain-containing protein (GHDC).